The chain runs to 759 residues: Catalase-peroxidase (759 aa).

A disordered region spans residues 1 to 24; sequence MTQDKCPFKEQSSQPNFAGGGTSN. A cross-link (tryptophyl-tyrosyl-methioninium (Trp-Tyr) (with M-268)) is located at residues 96–242; sequence WHSAGTYRVF…LAAAHMGLIY (147 aa). Histidine 97 (proton acceptor) is an active-site residue. A cross-link (tryptophyl-tyrosyl-methioninium (Tyr-Met) (with W-96)) is located at residues 242–268; sequence YVNPEGPDGNPDPVAAAHDIRDTFGRM. Residue histidine 283 coordinates heme b.

It belongs to the peroxidase family. Peroxidase/catalase subfamily. In terms of assembly, homodimer or homotetramer. Heme b serves as cofactor. Post-translationally, formation of the three residue Trp-Tyr-Met cross-link is important for the catalase, but not the peroxidase activity of the enzyme.

The protein localises to the cytoplasm. It catalyses the reaction H2O2 + AH2 = A + 2 H2O. The enzyme catalyses 2 H2O2 = O2 + 2 H2O. Functionally, bifunctional enzyme with both catalase and broad-spectrum peroxidase activity. In Aspergillus fumigatus (strain CBS 144.89 / FGSC A1163 / CEA10) (Neosartorya fumigata), this protein is Catalase-peroxidase.